A 204-amino-acid polypeptide reads, in one-letter code: Protein GrpE (204 aa).

Residues 1-12 (MSNQEKKMHEEE) show a composition bias toward basic and acidic residues. The segment at 1 to 37 (MSNQEKKMHEEELQQQETVEADTEAEAEAVGTDADIE) is disordered.

It belongs to the GrpE family. As to quaternary structure, homodimer.

It localises to the cytoplasm. Its function is as follows. Participates actively in the response to hyperosmotic and heat shock by preventing the aggregation of stress-denatured proteins, in association with DnaK and GrpE. It is the nucleotide exchange factor for DnaK and may function as a thermosensor. Unfolded proteins bind initially to DnaJ; upon interaction with the DnaJ-bound protein, DnaK hydrolyzes its bound ATP, resulting in the formation of a stable complex. GrpE releases ADP from DnaK; ATP binding to DnaK triggers the release of the substrate protein, thus completing the reaction cycle. Several rounds of ATP-dependent interactions between DnaJ, DnaK and GrpE are required for fully efficient folding. This Vibrio proteolyticus (Aeromonas proteolytica) protein is Protein GrpE.